Consider the following 762-residue polypeptide: Primary amine oxidase, liver isozyme (762 aa).

Positions 1 to 16 (MFIFIFLSLWTLLVMG) are cleaved as a signal peptide. The tract at residues 23–54 (GSEEGVGKQCHPSLPPRCPSRSPSDQPWTHPD) is disordered. The N-linked (GlcNAc...) asparagine glycan is linked to asparagine 136. Cysteine 197 and cysteine 198 are joined by a disulfide. A glycan (N-linked (GlcNAc...) asparagine) is linked at asparagine 231. 383 to 393 (YMDSGFGMGYF) contacts substrate. The active-site Proton acceptor is aspartate 385. A disulfide bridge links cysteine 403 with cysteine 429. 467-472 (MLNYDY) lines the substrate pocket. Tyrosine 470 serves as the catalytic Schiff-base intermediate with substrate; via topaquinone. At tyrosine 470 the chain carries 2',4',5'-topaquinone. The Cu cation site is built by histidine 519 and histidine 521. Aspartate 528, leucine 529, aspartate 530, glutamate 571, phenylalanine 662, and asparagine 664 together coordinate Ca(2+). An N-linked (GlcNAc...) asparagine glycan is attached at asparagine 665. Ca(2+)-binding residues include glutamate 666, aspartate 672, and leucine 673. Cu cation is bound at residue histidine 683. Cysteine 733 and cysteine 740 are oxidised to a cystine.

This sequence belongs to the copper/topaquinone oxidase family. As to quaternary structure, homodimer; disulfide-linked. Cu cation serves as cofactor. The cofactor is Ca(2+). L-topaquinone is required as a cofactor. In terms of processing, topaquinone (TPQ) is generated by copper-dependent autoxidation of a specific tyrosyl residue. As to expression, liver.

It is found in the secreted. The protein resides in the extracellular space. The enzyme catalyses a primary methyl amine + O2 + H2O = an aldehyde + H2O2 + NH4(+). The polypeptide is Primary amine oxidase, liver isozyme (Bos taurus (Bovine)).